We begin with the raw amino-acid sequence, 477 residues long: Glycogen synthase (477 aa).

An ADP-alpha-D-glucose-binding site is contributed by lysine 15.

The protein belongs to the glycosyltransferase 1 family. Bacterial/plant glycogen synthase subfamily.

It carries out the reaction [(1-&gt;4)-alpha-D-glucosyl](n) + ADP-alpha-D-glucose = [(1-&gt;4)-alpha-D-glucosyl](n+1) + ADP + H(+). Its pathway is glycan biosynthesis; glycogen biosynthesis. In terms of biological role, synthesizes alpha-1,4-glucan chains using ADP-glucose. The protein is Glycogen synthase of Streptococcus pneumoniae serotype 19F (strain G54).